Consider the following 567-residue polypeptide: Arginine--tRNA ligase (567 aa).

Positions 128 to 138 (ANPTGPLHVGH) match the 'HIGH' region motif.

Belongs to the class-I aminoacyl-tRNA synthetase family. In terms of assembly, monomer.

It is found in the cytoplasm. It catalyses the reaction tRNA(Arg) + L-arginine + ATP = L-arginyl-tRNA(Arg) + AMP + diphosphate. The chain is Arginine--tRNA ligase from Acidovorax ebreus (strain TPSY) (Diaphorobacter sp. (strain TPSY)).